The chain runs to 673 residues: Glycine--tRNA ligase beta subunit (673 aa).

Belongs to the class-II aminoacyl-tRNA synthetase family. In terms of assembly, tetramer of two alpha and two beta subunits.

Its subcellular location is the cytoplasm. The enzyme catalyses tRNA(Gly) + glycine + ATP = glycyl-tRNA(Gly) + AMP + diphosphate. This is Glycine--tRNA ligase beta subunit from Lactococcus lactis subsp. lactis (strain IL1403) (Streptococcus lactis).